The following is a 618-amino-acid chain: Putative ATP-dependent DNA helicase Q1 (618 aa).

In terms of domain architecture, Helicase ATP-binding spans 95-270; that stretch reads INAVMSKEDA…KKMLGIPVAI (176 aa). 108–115 lines the ATP pocket; that stretch reads LSTGGGKS. The short motif at 214–217 is the DEVH box element; sequence DEVH. Residues 295–443 enclose the Helicase C-terminal domain; that stretch reads CVEKIVRTIK…NLYNMVRYAS (149 aa). Cys448, Cys466, Cys470, and Cys473 together coordinate Zn(2+). The interval 586 to 618 is disordered; the sequence is KGRAEENNRKRKAAVTSSDEEVDVGDDDDVITL. Acidic residues predominate over residues 603–618; sequence SDEEVDVGDDDDVITL.

This sequence belongs to the helicase family. RecQ subfamily. The cofactor is Zn(2+).

It is found in the nucleus. The catalysed reaction is Couples ATP hydrolysis with the unwinding of duplex DNA by translocating in the 3'-5' direction.. It carries out the reaction ATP + H2O = ADP + phosphate + H(+). DNA helicase that may play a role in the repair of DNA that is damaged by ultraviolet light or other mutagens. Exhibits a magnesium-dependent ATP-dependent DNA-helicase activity that unwinds single- and double-stranded DNA in a 3'-5' direction. This is Putative ATP-dependent DNA helicase Q1 from Caenorhabditis briggsae.